Consider the following 378-residue polypeptide: Galanin receptor 2b (378 aa).

Residues 1–30 (MSDHEDLNKAMGHWNASESYQLNPASVIVS) lie on the Extracellular side of the membrane. The chain crosses the membrane as a helical span at residues 31–51 (VVFSLIFLLGTIGNSLVLAVL). Residues 52 to 62 (LRSGQVGYNTT) are Cytoplasmic-facing. The helical transmembrane segment at 63-83 (NLFILNLSVADFFFIIFCVPF) threads the bilayer. The Extracellular portion of the chain corresponds to 84 to 101 (QATIYSLEGWVFGSFMCK). Cys100 and Cys177 form a disulfide bridge. The chain crosses the membrane as a helical span at residues 102–123 (VVHFFINLTMYASSFTLAAVSV). Over 124–143 (DRYLAIRYPLRSRELRTPCN) the chain is Cytoplasmic. A helical transmembrane segment spans residues 144–164 (AVVAMVVIWGLSLVFAGPYLS). Residues 165–187 (YYDLIDFENSNVCVPGWEEHNRK) are Extracellular-facing. Residues 188 to 208 (VLDTCTFVFGYVIPVLIVSLS) form a helical membrane-spanning segment. At 209–238 (YTRTIKYLWTAVDPLDGMSESKRAKRKVTK) the chain is on the cytoplasmic side. A helical membrane pass occupies residues 239 to 259 (MIIIVTVLFCICWLPYHVVIL). Over 260–276 (CYLYGDFPFNQTTYAFR) the chain is Extracellular. A helical transmembrane segment spans residues 277–297 (LLSHCMAYANSCLNPIVYALV). Over 298–378 (SKHFRKGFKK…TITLPFQNQP (81 aa)) the chain is Cytoplasmic. The segment at 339–362 (EVSQMNEENARQNESEMVNRPLAQ) is disordered.

Belongs to the G-protein coupled receptor 1 family. In terms of tissue distribution, expressed in neurons in the ventral area of the interpeduncular nucleus (IPN) where expression often overlaps with spx1.

Its subcellular location is the membrane. In terms of biological role, receptor for the hormone galanin. Receptor for the hormones spexin-1 and spexin-2. This Danio rerio (Zebrafish) protein is Galanin receptor 2b.